The chain runs to 500 residues: Glycerol kinase (500 aa).

Position 11 (threonine 11) interacts with ADP. Residues threonine 11, threonine 12, and serine 13 each contribute to the ATP site. Position 11 (threonine 11) interacts with sn-glycerol 3-phosphate. Residue arginine 15 participates in ADP binding. 4 residues coordinate sn-glycerol 3-phosphate: arginine 81, glutamate 82, tyrosine 133, and aspartate 242. Positions 81, 82, 133, 242, and 243 each coordinate glycerol. ADP-binding residues include threonine 264 and glycine 307. The ATP site is built by threonine 264, glycine 307, glutamine 311, and glycine 411. Glycine 411 is an ADP binding site.

The protein belongs to the FGGY kinase family.

The enzyme catalyses glycerol + ATP = sn-glycerol 3-phosphate + ADP + H(+). It functions in the pathway polyol metabolism; glycerol degradation via glycerol kinase pathway; sn-glycerol 3-phosphate from glycerol: step 1/1. With respect to regulation, inhibited by fructose 1,6-bisphosphate (FBP). In terms of biological role, key enzyme in the regulation of glycerol uptake and metabolism. Catalyzes the phosphorylation of glycerol to yield sn-glycerol 3-phosphate. The protein is Glycerol kinase of Bradyrhizobium sp. (strain BTAi1 / ATCC BAA-1182).